The chain runs to 1461 residues: Major viral transcription factor ICP4 homolog (1461 aa).

Disordered regions lie at residues 25 to 60 (AAEEEGIASGPDGGSQGSRRRGSSGEDLLFGPGGLF), 75 to 518 (AAGA…SREG), 811 to 1002 (RPGP…PRPS), and 1395 to 1461 (AGGA…LLLR). Residues 75–90 (AAGATRPPRPPSAQQQ) are compositionally biased toward low complexity. A compositionally biased stretch (acidic residues) spans 102–113 (VLDDEDEEEDEP). 2 stretches are compositionally biased toward low complexity: residues 167–197 (RSSPSAASPASSSSGSSGSSGSPGPSAAPRR) and 224–249 (PAAVAAAPARRGPASPASPAAGPVSA). A compositionally biased stretch (gly residues) spans 250-260 (PGGGGAPSGGG). Residues 270-285 (REPLLDEPAAARRLDP) are compositionally biased toward basic and acidic residues. 2 stretches are compositionally biased toward low complexity: residues 292–308 (SPVSSNPNSSSSSTTTV) and 353–405 (GFSS…SSSS). The span at 423–434 (GPPPSPPAPAAA) shows a compositional bias: pro residues. Residues 435–453 (PRPSASSASATSSSAAASP) show a composition bias toward low complexity. Residues 814 to 826 (PAEPAPGLPPLWP) are compositionally biased toward pro residues. Low complexity predominate over residues 838-888 (PAAAGAPSGLPGSGPSSPASTKSGSSTKSSSGTKSGLSGSSGYASSPAAGP). A compositionally biased stretch (basic residues) spans 894–903 (RRKKKRRAPG). Residues 944-965 (LGLGPAPDPAPALVSSSSSSSS) are compositionally biased toward low complexity.

It belongs to the herpesviridae ICP4 family. A long stretch of serine residues may be a major site of phosphorylation.

The protein localises to the host nucleus. This IE protein is a multifunctional protein capable of migrating to the nucleus, binding to DNA, trans-activating other viral genes, and autoregulating its own synthesis. The polypeptide is Major viral transcription factor ICP4 homolog (IE) (Sus scrofa (Pig)).